The chain runs to 365 residues: MKKQRIVVKIGSSSLTNSKGSIDEAKIREHVQAISVLKKAGHEMILITSGAVAAGFSSLGYPSRPVTIKGKQAAAAVGQTLLMQQYMNQFKQYSLTPGQILLTRNDFSKRERYRNAYATIMELLERGVIPIINENDSTSVEELTFGDNDMLSALVSGLIHADQLMILTDINGLYDANPNENPEAKRFDYLPEITPELLGYAGSAGSKVGTGGMKSKLLATQTALSLGVKVFIGTGSGEQKLADILDGRGDGTYIGDKELSSVNNTRQWIQFHSPISGEIIIDAGAEEAMIHNGSSLLPAGVVGVNGSFPKGAVVEVRGPGGVIGKGQTHYSSEEIMEAKGKRSDELDFEKTFEVIHRNDWVNVKD.

Lys9 contacts ATP. Substrate is bound by residues Ser49, Asp136, and Asn148. Residues 168–169 (TD) and 210–216 (TGGMKSK) contribute to the ATP site. One can recognise a PUA domain in the interval 276–353 (SGEIIIDAGA…DELDFEKTFE (78 aa)).

It belongs to the glutamate 5-kinase family.

It is found in the cytoplasm. The enzyme catalyses L-glutamate + ATP = L-glutamyl 5-phosphate + ADP. The protein operates within amino-acid biosynthesis; L-proline biosynthesis; L-glutamate 5-semialdehyde from L-glutamate: step 1/2. Functionally, catalyzes the transfer of a phosphate group to glutamate to form L-glutamate 5-phosphate. This is Glutamate 5-kinase 1 from Bacillus subtilis (strain 168).